A 69-amino-acid polypeptide reads, in one-letter code: Putative membrane protein insertion efficiency factor (69 aa).

It belongs to the UPF0161 family.

The protein localises to the cell inner membrane. Its function is as follows. Could be involved in insertion of integral membrane proteins into the membrane. The sequence is that of Putative membrane protein insertion efficiency factor from Laribacter hongkongensis (strain HLHK9).